A 427-amino-acid polypeptide reads, in one-letter code: 3-phosphoshikimate 1-carboxyvinyltransferase (427 aa).

The 3-phosphoshikimate site is built by Lys22, Ser23, and Arg27. Residue Lys22 coordinates phosphoenolpyruvate. Phosphoenolpyruvate-binding residues include Gly96 and Arg124. 3-phosphoshikimate-binding residues include Ser169, Ser170, Gln171, Ser197, Asp313, Asn336, and Lys340. Gln171 is a phosphoenolpyruvate binding site. Residue Asp313 is the Proton acceptor of the active site. 3 residues coordinate phosphoenolpyruvate: Arg344, Arg386, and Lys411.

The protein belongs to the EPSP synthase family. Monomer.

It is found in the cytoplasm. It carries out the reaction 3-phosphoshikimate + phosphoenolpyruvate = 5-O-(1-carboxyvinyl)-3-phosphoshikimate + phosphate. It participates in metabolic intermediate biosynthesis; chorismate biosynthesis; chorismate from D-erythrose 4-phosphate and phosphoenolpyruvate: step 6/7. Functionally, catalyzes the transfer of the enolpyruvyl moiety of phosphoenolpyruvate (PEP) to the 5-hydroxyl of shikimate-3-phosphate (S3P) to produce enolpyruvyl shikimate-3-phosphate and inorganic phosphate. The sequence is that of 3-phosphoshikimate 1-carboxyvinyltransferase from Shigella flexneri serotype 5b (strain 8401).